A 1230-amino-acid chain; its full sequence is Protein transport protein Sec31A (1230 aa).

7 WD repeats span residues 4 to 47 (KEID…EIFE), 64 to 111 (SSSH…AGDK), 120 to 160 (KHTG…TPMT), 166 to 206 (QPPE…PIIK), 209 to 254 (DHSN…SPLR), 258 to 298 (NHAR…VLYE), and 301 to 342 (TNTQ…DGLR). Residues 161 to 470 (PGAKTQPPED…IEASQTEFEK (310 aa)) are interaction with SEC13. A WD 8; interaction with SEC13 repeat occupies 397–429 (SFSFGGKLVTFESVAVPLQQGAEQQRRQPVFIS). Residue arginine 423 is modified to Asymmetric dimethylarginine. 2 positions are modified to phosphoserine: serine 526 and serine 531. Lysine 646 participates in a covalent cross-link: Glycyl lysine isopeptide (Lys-Gly) (interchain with G-Cter in ubiquitin). 2 disordered regions span residues 789–905 (QGKP…ASNA) and 924–1104 (MYTA…PIGN). Phosphoserine is present on serine 798. Residues 799–1123 (SQSPYERQPL…TEKITKKPIP (325 aa)) are interaction with PDCD6. The ALG-2-binding site motif-2 (ABS-2) signature appears at 841–847 (GFIMQGN). A compositionally biased stretch (pro residues) spans 866 to 876 (QLPPYPQPQPY). Composition is skewed to low complexity over residues 930-940 (ASSPTSSSAAS) and 959-975 (PSSS…GTPP). Composition is skewed to polar residues over residues 981-995 (PASQ…QDQA) and 1033-1064 (PIMN…SFPQ). Threonine 1171 bears the Phosphothreonine mark. At serine 1173 the chain carries Phosphoserine. Lysine 1227 participates in a covalent cross-link: Glycyl lysine isopeptide (Lys-Gly) (interchain with G-Cter in ubiquitin).

The protein belongs to the WD repeat SEC31 family. In terms of assembly, COPII is composed of at least 5 proteins: the SEC23/24 complex, the SEC13/31 complex and SAR1. SEC13 and SEC31 make a 2:2 tetramer that forms the edge element of the COPII outer coat. The tetramer self-assembles in multiple copies to form the complete polyhedral cage. Interacts (via WD 8) with SEC13. Interacts with PDCD6; interaction takes place in response to cytosolic calcium increase and leads to bridge together the BCR(KLHL12) complex and SEC31A, leading to monoubiquitination. Interacts with KLHL12. Monoubiquitinated by the BCR(KLHL12) E3 ubiquitin ligase complex, leading to regulate the size of COPII coats.

Its subcellular location is the cytoplasm. The protein resides in the cytoplasmic vesicle. The protein localises to the COPII-coated vesicle membrane. It localises to the endoplasmic reticulum membrane. Component of the coat protein complex II (COPII) which promotes the formation of transport vesicles from the endoplasmic reticulum (ER). The coat has two main functions, the physical deformation of the endoplasmic reticulum membrane into vesicles and the selection of cargo molecules. This is Protein transport protein Sec31A (Sec31a) from Mus musculus (Mouse).